Consider the following 367-residue polypeptide: Anthranilate phosphoribosyltransferase (367 aa).

Residues 1 to 21 (MALSSESSAASAARRPSGGPA) are compositionally biased toward low complexity. Positions 1–24 (MALSSESSAASAARRPSGGPATSW) are disordered. 5-phospho-alpha-D-ribose 1-diphosphate-binding positions include glycine 104, 107–108 (GD), threonine 112, 114–117 (NLST), 132–140 (KHGNRAASS), and glycine 144. Glycine 104 contacts anthranilate. A Mg(2+)-binding site is contributed by serine 116. Asparagine 135 contributes to the anthranilate binding site. Residue arginine 190 participates in anthranilate binding. Mg(2+) is bound by residues aspartate 248 and glutamate 249.

The protein belongs to the anthranilate phosphoribosyltransferase family. As to quaternary structure, homodimer. Requires Mg(2+) as cofactor.

It catalyses the reaction N-(5-phospho-beta-D-ribosyl)anthranilate + diphosphate = 5-phospho-alpha-D-ribose 1-diphosphate + anthranilate. Its pathway is amino-acid biosynthesis; L-tryptophan biosynthesis; L-tryptophan from chorismate: step 2/5. Catalyzes the transfer of the phosphoribosyl group of 5-phosphorylribose-1-pyrophosphate (PRPP) to anthranilate to yield N-(5'-phosphoribosyl)-anthranilate (PRA). The chain is Anthranilate phosphoribosyltransferase from Mycolicibacterium paratuberculosis (strain ATCC BAA-968 / K-10) (Mycobacterium paratuberculosis).